Reading from the N-terminus, the 117-residue chain is Small ribosomal subunit protein bS6 (117 aa).

The segment at 96-117 (HDEGPSVQMQKRDEREGRRERR) is disordered.

It belongs to the bacterial ribosomal protein bS6 family.

Binds together with bS18 to 16S ribosomal RNA. The polypeptide is Small ribosomal subunit protein bS6 (Jannaschia sp. (strain CCS1)).